Consider the following 342-residue polypeptide: UDP-glucuronic acid decarboxylase 3 (342 aa).

Positions 1–11 (MAATSEKQNTT) are enriched in polar residues. The interval 1–22 (MAATSEKQNTTKPPPSPSPLRN) is disordered. Residue 61–86 (DNYFTGSKENLKKWIGHPRFELIRHD) coordinates NAD(+). Arg-170 serves as a coordination point for substrate. The Proton acceptor role is filled by Tyr-173. Position 173–177 (173–177 (YDEGK)) interacts with NAD(+). Asn-202 contributes to the substrate binding site. Arg-214 provides a ligand contact to NAD(+). Residues 215–219 (VVSNF), 232–239 (QKPGTQTR), and 299–303 (DPRQR) contribute to the substrate site.

Belongs to the NAD(P)-dependent epimerase/dehydratase family. UDP-glucuronic acid decarboxylase subfamily. Requires NAD(+) as cofactor. Ubiquitous.

The protein resides in the cytoplasm. The catalysed reaction is UDP-alpha-D-glucuronate + H(+) = UDP-alpha-D-xylose + CO2. The protein operates within nucleotide-sugar biosynthesis; UDP-alpha-D-xylose biosynthesis; UDP-alpha-D-xylose from UDP-alpha-D-glucuronate: step 1/1. Its function is as follows. Catalyzes the NAD-dependent decarboxylation of UDP-glucuronic acid to UDP-xylose. Necessary for the biosynthesis of the core tetrasaccharide in glycosaminoglycan biosynthesis. This is UDP-glucuronic acid decarboxylase 3 (UXS3) from Arabidopsis thaliana (Mouse-ear cress).